Reading from the N-terminus, the 394-residue chain is Ceramide glucosyltransferase (394 aa).

Over 1 to 10 (MALLDLAQEG) the chain is Lumenal. A helical membrane pass occupies residues 11 to 32 (MALFGFVLFVVLWLMHFMSIIY). The Cytoplasmic portion of the chain corresponds to 33 to 195 (TRLHLNKKAT…QVYFGTSHPR (163 aa)). A short sequence motif (D1) is located at residue Asp92. Position 117 is an N6-acetyllysine (Lys117). Residue Asp144 is a short sequence motif, D2. Residues 196–215 (SYISANVTGFKCVTGMSCLM) traverse the membrane as a helical segment. Topologically, residues 216 to 287 (RKDVLDQAGG…KLRINMLPAT (72 aa)) are lumenal. A short sequence motif (D3) is located at residue Asp236. Asp236 acts as the Proton acceptor in catalysis. The short motif at 272-276 (RMIRW) is the (Q/R)XXRW element. A helical membrane pass occupies residues 288–304 (IICEPISECFVASLIIG). At 305 to 309 (WAAHH) the chain is on the cytoplasmic side. Residues 310–328 (VFRWDIMVFFMCHCLAWFI) form a helical membrane-spanning segment. The Lumenal portion of the chain corresponds to 329-348 (FDYIQLRGVQGGTLCFSKLD). Residues 349–369 (YAVAWFIRESMTIYIFLSALW) form a helical membrane-spanning segment. Over 370–394 (DPTISWRTGRYRLRCGGTAEEILDV) the chain is Cytoplasmic.

This sequence belongs to the glycosyltransferase 2 family. Interacts with RTN1; regulates the ceramide glucosyltransferase activity of UGCG.

The protein resides in the golgi apparatus membrane. The enzyme catalyses an N-acylsphing-4-enine + UDP-alpha-D-glucose = a beta-D-glucosyl-(1&lt;-&gt;1')-N-acylsphing-4-enine + UDP + H(+). The catalysed reaction is UDP-alpha-D-xylose + an N-acylsphing-4-enine = a beta-D-xylosyl-(1&lt;-&gt;1')-N-acylsphing-4-enine + UDP + H(+). It carries out the reaction N-(9Z-octadecenoyl)-sphing-4-enine + UDP-alpha-D-xylose = beta-D-xylosyl-(1&lt;-&gt;1')-N-(9Z-octadecenoyl)-sphing-4-enine + UDP + H(+). Its pathway is lipid metabolism; sphingolipid metabolism. Functionally, participates in the initial step of the glucosylceramide-based glycosphingolipid/GSL synthetic pathway at the cytosolic surface of the Golgi. Catalyzes the transfer of glucose from UDP-glucose to ceramide to produce glucosylceramide/GlcCer (such as beta-D-glucosyl-(1&lt;-&gt;1')-N-acylsphing-4-enine). Glucosylceramide is the core component of glycosphingolipids/GSLs, amphipathic molecules consisting of a ceramide lipid moiety embedded in the outer leaflet of the membrane, linked to one of hundreds of different externally oriented oligosaccharide structures. Glycosphingolipids are essential components of membrane microdomains that mediate membrane trafficking and signal transduction. They are implicated in many fundamental cellular processes, including growth, differentiation, migration, morphogenesis, cell-to-cell and cell-to-matrix interactions. They are required for instance in the proper development and functioning of the nervous system. As an example of their role in signal transduction, they regulate the leptin receptor/LEPR in the leptin-mediated signaling pathway. They also play an important role in the establishment of the skin barrier regulating keratinocyte differentiation and the proper assembly of the cornified envelope. The biosynthesis of GSLs is also required for the proper intestinal endocytic uptake of nutritional lipids. Catalyzes the synthesis of xylosylceramide/XylCer (such as beta-D-xylosyl-(1&lt;-&gt;1')-N-acylsphing-4-enine) using UDP-Xyl as xylose donor. The polypeptide is Ceramide glucosyltransferase (Mus musculus (Mouse)).